We begin with the raw amino-acid sequence, 253 residues long: ABC transporter D-alanine-binding periplasmic protein (253 aa).

A signal peptide spans 1-22 (MLSKKFGLSMIVLGIMSSSAFA). Gly-95, Ser-97, Arg-102, Ala-147, and Glu-191 together coordinate D-alanine.

This sequence belongs to the bacterial solute-binding protein 3 family. Monomer.

It is found in the periplasm. Functionally, part of the ABC transporter complex dalSTUV, that imports D-alanine into the cytoplasm. Helps protect the organism from oxidative killing by host neutrophils through sequestration of D-alanine, a substrate that is converted to hydrogen peroxide by the host enzyme DAO (D-amino acid oxidase). DalS shuttles D-alanine from the periplasm to the DalTUV complex situated in the inner membrane and through hydrolysis of ATP, D-alanine is transported across the membrane into the cytoplasm. Not required for the metabolism of D-alanine found in the stem peptide of peptidoglycan. This Salmonella typhimurium (strain LT2 / SGSC1412 / ATCC 700720) protein is ABC transporter D-alanine-binding periplasmic protein.